A 293-amino-acid polypeptide reads, in one-letter code: Ribosomal protein L11 methyltransferase (293 aa).

S-adenosyl-L-methionine is bound by residues T145, G166, D188, and N230.

Belongs to the methyltransferase superfamily. PrmA family.

Its subcellular location is the cytoplasm. The enzyme catalyses L-lysyl-[protein] + 3 S-adenosyl-L-methionine = N(6),N(6),N(6)-trimethyl-L-lysyl-[protein] + 3 S-adenosyl-L-homocysteine + 3 H(+). Methylates ribosomal protein L11. The sequence is that of Ribosomal protein L11 methyltransferase from Shewanella baltica (strain OS185).